A 367-amino-acid chain; its full sequence is Phthiodiolone/phenolphthiodiolone dimycocerosates ketoreductase (367 aa).

It belongs to the mer family. Phthiodiolone/phenolphthiodiolone dimycocerosates ketoreductase subfamily.

Catalyzes the reduction of the keto moiety of phthiodiolone dimycocerosates (DIM B) and glycosylated phenolphthiodiolone dimycocerosates to form the intermediate compounds phthiotriol and glycosylated phenolphthiotriol dimycocerosates during phthiocerol dimycocerosates (DIM A) and glycosylated phenolphthiocerol dimycocerosates (PGL) biosynthesis. This chain is Phthiodiolone/phenolphthiodiolone dimycocerosates ketoreductase, found in Mycobacterium kansasii.